We begin with the raw amino-acid sequence, 1178 residues long: Tricalbin-2 (1178 aa).

Over residues 1-17 the composition is skewed to polar residues; sequence MSPNSSKTRTDQISSMP. The segment at 1–27 is disordered; that stretch reads MSPNSSKTRTDQISSMPGINEATKVES. Residues 1-98 lie on the Cytoplasmic side of the membrane; it reads MSPNSSKTRT…NLLPDKFYGD (98 aa). The chain crosses the membrane as a helical span at residues 99–119; it reads WYHEVAILIIAGLCSFVLGYF. Lys120 is a topological domain (extracellular). Residues 121–141 traverse the membrane as a helical segment; it reads FSLASVLIVMLTTGMLYRTSS. Residues 142–1178 lie on the Cytoplasmic side of the membrane; sequence KKYRESLRDL…TGDKKSEEKQ (1037 aa). The SMP-LTD domain occupies 164–367; that stretch reads DYESVEWLNT…PPFSLQLNIP (204 aa). 3 C2 domains span residues 358–481, 504–628, and 632–749; these read PPFS…EKVH, PKKL…LKVT, and RPVD…DKYT. Residues 784–821 are a coiled coil; the sequence is LSLEEAKEVDEINEKKDKLEKQKSTLDDKNISKEEKER. In terms of domain architecture, C2 4 spans 962–1086; the sequence is QVSWFPVTAT…DPESDTTFNI (125 aa). Ser991 is modified (phosphoserine).

It belongs to the tricalbin family. As to quaternary structure, interacts with TCB1 and TCB3 via its C-terminal domain.

It localises to the cell membrane. Its subcellular location is the endoplasmic reticulum membrane. In terms of biological role, may play a role in membrane trafficking. This Saccharomyces cerevisiae (strain ATCC 204508 / S288c) (Baker's yeast) protein is Tricalbin-2 (TCB2).